Here is a 95-residue protein sequence, read N- to C-terminus: Aspartyl/glutamyl-tRNA(Asn/Gln) amidotransferase subunit C (95 aa).

This sequence belongs to the GatC family. In terms of assembly, heterotrimer of A, B and C subunits.

It carries out the reaction L-glutamyl-tRNA(Gln) + L-glutamine + ATP + H2O = L-glutaminyl-tRNA(Gln) + L-glutamate + ADP + phosphate + H(+). The enzyme catalyses L-aspartyl-tRNA(Asn) + L-glutamine + ATP + H2O = L-asparaginyl-tRNA(Asn) + L-glutamate + ADP + phosphate + 2 H(+). Its function is as follows. Allows the formation of correctly charged Asn-tRNA(Asn) or Gln-tRNA(Gln) through the transamidation of misacylated Asp-tRNA(Asn) or Glu-tRNA(Gln) in organisms which lack either or both of asparaginyl-tRNA or glutaminyl-tRNA synthetases. The reaction takes place in the presence of glutamine and ATP through an activated phospho-Asp-tRNA(Asn) or phospho-Glu-tRNA(Gln). The chain is Aspartyl/glutamyl-tRNA(Asn/Gln) amidotransferase subunit C from Chloroherpeton thalassium (strain ATCC 35110 / GB-78).